The sequence spans 545 residues: CTP synthase (545 aa).

The amidoligase domain stretch occupies residues 1 to 266 (MTTNYIFVTG…DDLVCARFGI (266 aa)). Ser-14 is a CTP binding site. Ser-14 contacts UTP. ATP contacts are provided by residues 15–20 (SLGKGI) and Asp-72. The Mg(2+) site is built by Asp-72 and Glu-140. CTP contacts are provided by residues 147–149 (DIE), 187–192 (KTKPTQ), and Lys-223. Residues 187 to 192 (KTKPTQ) and Lys-223 contribute to the UTP site. 239 to 241 (KDV) contacts ATP. A Glutamine amidotransferase type-1 domain is found at 291-542 (TIGMVGKYTE…VKAAGQFQRG (252 aa)). Gly-352 contributes to the L-glutamine binding site. Cys-379 serves as the catalytic Nucleophile; for glutamine hydrolysis. L-glutamine is bound by residues 380–383 (LGMQ), Glu-403, and Arg-470. Catalysis depends on residues His-515 and Glu-517.

The protein belongs to the CTP synthase family. In terms of assembly, homotetramer.

It catalyses the reaction UTP + L-glutamine + ATP + H2O = CTP + L-glutamate + ADP + phosphate + 2 H(+). The enzyme catalyses L-glutamine + H2O = L-glutamate + NH4(+). The catalysed reaction is UTP + NH4(+) + ATP = CTP + ADP + phosphate + 2 H(+). Its pathway is pyrimidine metabolism; CTP biosynthesis via de novo pathway; CTP from UDP: step 2/2. Allosterically activated by GTP, when glutamine is the substrate; GTP has no effect on the reaction when ammonia is the substrate. The allosteric effector GTP functions by stabilizing the protein conformation that binds the tetrahedral intermediate(s) formed during glutamine hydrolysis. Inhibited by the product CTP, via allosteric rather than competitive inhibition. Functionally, catalyzes the ATP-dependent amination of UTP to CTP with either L-glutamine or ammonia as the source of nitrogen. Regulates intracellular CTP levels through interactions with the four ribonucleotide triphosphates. The protein is CTP synthase of Vibrio cholerae serotype O1 (strain ATCC 39541 / Classical Ogawa 395 / O395).